The chain runs to 135 residues: Fatty acid-binding protein 5 (135 aa).

N-acetylalanine is present on Ala2. Phosphoserine is present on Ser3. The Nuclear localization signal signature appears at 24 to 34 (KELGVGLALRK). Residues Cys43, Thr56, and Arg109 each coordinate 1-eicosanoylglycerol. Cysteines 120 and 127 form a disulfide. 1-eicosanoylglycerol is bound at residue 129-131 (RVY). 129–131 (RVY) contributes to the (9Z,12Z)-octadecadienoate binding site. Tyr131 lines the hexadecanoate pocket. Tyr131 lines the N-eicosanoyl ethanolamine pocket. A Phosphotyrosine modification is found at Tyr131.

Belongs to the calycin superfamily. Fatty-acid binding protein (FABP) family. Monomer. As to expression, widely expressed.

Its subcellular location is the cytoplasm. It is found in the nucleus. The protein localises to the synapse. It localises to the postsynaptic density. The protein resides in the secreted. It carries out the reaction hexadecanoate(out) = hexadecanoate(in). The enzyme catalyses (9Z,12Z)-octadecadienoate(out) = (9Z,12Z)-octadecadienoate(in). The catalysed reaction is (9Z)-octadecenoate(out) = (9Z)-octadecenoate(in). Intracellular carrier for long-chain fatty acids and related active lipids, such as endocannabinoids, that regulate the metabolism and actions of the ligands they bind. In addition to the cytosolic transport, selectively delivers specific fatty acids from the cytosol to the nucleus, wherein they activate nuclear receptors. Delivers retinoic acid to the nuclear receptor peroxisome proliferator-activated receptor delta; which promotes proliferation and survival. May also serve as a synaptic carrier of endocannabinoid at central synapses and thus controls retrograde endocannabinoid signaling. Modulates inflammation by regulating PTGES induction via NF-kappa-B activation, and prostaglandin E2 (PGE2) biosynthesis during inflammation. May be involved in keratinocyte differentiation. This chain is Fatty acid-binding protein 5, found in Mus musculus (Mouse).